We begin with the raw amino-acid sequence, 1105 residues long: AP-3 complex subunit beta-1 (1105 aa).

Disordered regions lie at residues 1-26 (MSSN…EATS) and 271-292 (KNFY…KKSY). Ser276 and Ser610 each carry phosphoserine. Residues 668–824 (KKEKPMKKFY…KPQQERHPPS (157 aa)) are disordered. Over residues 679-704 (ESEEEEDEDEDEDEEEEEKEDEDENP) the composition is skewed to acidic residues. Composition is skewed to low complexity over residues 705–722 (SDSS…SGDT) and 730–741 (DSSSGQDSETGS). The segment covering 750–759 (VAKRNSKTKR) has biased composition (basic residues). The segment covering 760–774 (KSDSENREKKNENSK) has biased composition (basic and acidic residues). Ser761 and Ser763 each carry phosphoserine. The segment covering 775–788 (ASESSSEESSSMED) has biased composition (low complexity). A compositionally biased stretch (acidic residues) spans 789–799 (SSSESESESGS). Basic and acidic residues predominate over residues 811–824 (AKERKPQQERHPPS).

It belongs to the adaptor complexes large subunit family. Adaptor protein complex 3 (AP-3) is a heterotetramer composed of two large adaptins (delta-type subunit AP3D1 and beta-type subunit AP3B1 or AP3B2), a medium adaptin (mu-type subunit AP3M1 or AP3M2) and a small adaptin (sigma-type subunit APS1 or AP3S2). AP-3 associates with the BLOC-1 complex. Interacts with KIF3A; interaction is direct; interaction is impaired by pyrophosphorylation of AP3B1. Post-translationally, phosphorylated on serine residues. Pyrophosphorylated by 5-diphosphoinositol pentakisphosphate (5-IP7). Pyrophosphorylation impairs interaction with KIF3A. Serine pyrophosphorylation is achieved by Mg(2+)-dependent, but enzyme independent transfer of a beta-phosphate from a inositol pyrophosphate to a pre-phosphorylated serine residue. As to expression, ubiquitously expressed.

It localises to the cytoplasmic vesicle. Its subcellular location is the clathrin-coated vesicle membrane. It is found in the golgi apparatus. In terms of biological role, subunit of non-clathrin- and clathrin-associated adaptor protein complex 3 (AP-3) that plays a role in protein sorting in the late-Golgi/trans-Golgi network (TGN) and/or endosomes. The AP complexes mediate both the recruitment of clathrin to membranes and the recognition of sorting signals within the cytosolic tails of transmembrane cargo molecules. AP-3 appears to be involved in the sorting of a subset of transmembrane proteins targeted to lysosomes and lysosome-related organelles. In concert with the BLOC-1 complex, AP-3 is required to target cargos into vesicles assembled at cell bodies for delivery into neurites and nerve terminals. This chain is AP-3 complex subunit beta-1 (Ap3b1), found in Mus musculus (Mouse).